The sequence spans 81 residues: CLAVATA3/ESR (CLE)-related protein 6 (81 aa).

The first 26 residues, 1-26, serve as a signal peptide directing secretion; it reads MANLILKQSLIILLIIYSTPILSSQA. Hydroxyproline is present on residues Pro-73 and Pro-76. An O-linked (Ara...) hydroxyproline glycan is attached at Pro-76.

Belongs to the CLV3/ESR signal peptide family. The O-glycosylation (arabinosylation) of the hydroxyproline Pro-76 enhances binding affinity of the CLE6p peptide for its receptor. As to expression, mostly expressed in roots, seedlings, stems and flowers, and, to a lower extent, in apex and siliques.

It is found in the secreted. The protein resides in the extracellular space. Its function is as follows. Extracellular signal peptide that regulates cell fate. The chain is CLAVATA3/ESR (CLE)-related protein 6 from Arabidopsis thaliana (Mouse-ear cress).